The chain runs to 295 residues: Outer surface protein B (295 aa).

Residues 1–16 (MKQYLLGFTLVFALIA) form the signal peptide. Cys-17 carries the N-palmitoyl cysteine lipid modification. Cys-17 is lipidated: S-diacylglycerol cysteine.

It is found in the cell outer membrane. The sequence is that of Outer surface protein B (ospB) from Borreliella burgdorferi (Lyme disease spirochete).